The chain runs to 481 residues: UDP-glycosyltransferase 72E3 (481 aa).

His-18 (proton acceptor) is an active-site residue. An anthocyanidin is bound at residue His-18. The active-site Charge relay is the Asp-111. Positions 346, 348, 363, 366, 368, and 371 each coordinate UDP-alpha-D-glucose. An anthocyanidin is bound at residue Ala-386. The UDP-alpha-D-glucose site is built by Glu-387 and Gln-388.

It belongs to the UDP-glycosyltransferase family. As to expression, expressed in seedlings and roots, and at lower levels in flowers and siliques.

It catalyses the reaction (E)-4-coumarate + UDP-alpha-D-glucose = 4-O-(beta-D-glucosyl)-trans-4-coumarate + UDP + H(+). The enzyme catalyses (E)-sinapyl alcohol + UDP-alpha-D-glucose = 4-O-(beta-D-glucosyl)-trans-4-sinapoyl alcohol + UDP + H(+). It carries out the reaction (E)-coniferol + UDP-alpha-D-glucose = 4-O-(beta-D-glucosyl)-(E)-coniferol + UDP + H(+). The catalysed reaction is (E)-sinapate + UDP-alpha-D-glucose = 4-O-(beta-D-glucosyl)-trans-sinapate + UDP + H(+). It catalyses the reaction (E)-coniferaldehyde + UDP-alpha-D-glucose = 4-O-(beta-D-glucosyl)-4-(E)-coniferyl aldehyde + UDP + H(+). The enzyme catalyses (E)-sinapaldehyde + UDP-alpha-D-glucose = 4-O-(beta-D-glucosyl)-4-trans-sinapoyl aldehyde + UDP + H(+). Its function is as follows. Involved in the O-glucosylation of monolignols (alcohol monomers of lignin). Glucosylates coniferyl alcohol to form coniferyl alcohol 4-O-glucoside. Glucosylates sinapyl alcohol to form sinapyl alcohol 4-O-glucoside. Possesses low activity with sinapate as substrate. This chain is UDP-glycosyltransferase 72E3, found in Arabidopsis thaliana (Mouse-ear cress).